Consider the following 72-residue polypeptide: Crustacean hyperglycemic hormone A (72 aa).

The residue at position 1 (Gln1) is a Pyrrolidone carboxylic acid. Phe3 bears the D-phenylalanine; in form CHHA-II mark. 3 cysteine pairs are disulfide-bonded: Cys7-Cys43, Cys23-Cys39, and Cys26-Cys52. Val72 bears the Valine amide mark.

Stereoinversion of L-Phe (in CHHA-I) to D-Phe (in CHHA-II).

The protein resides in the secreted. In terms of biological role, hormone found in the sinus gland of isopods and decapods which controls the blood sugar level. Has a secretagogue action over the amylase released from the midgut gland. May act as a stress hormone and may be involved in the control of molting and reproduction. The sequence is that of Crustacean hyperglycemic hormone A from Cherax destructor (Common yabby crayfish).